A 347-amino-acid polypeptide reads, in one-letter code: Phosphoribosylformylglycinamidine cyclo-ligase (347 aa).

This sequence belongs to the AIR synthase family.

The protein resides in the cytoplasm. The enzyme catalyses 2-formamido-N(1)-(5-O-phospho-beta-D-ribosyl)acetamidine + ATP = 5-amino-1-(5-phospho-beta-D-ribosyl)imidazole + ADP + phosphate + H(+). It participates in purine metabolism; IMP biosynthesis via de novo pathway; 5-amino-1-(5-phospho-D-ribosyl)imidazole from N(2)-formyl-N(1)-(5-phospho-D-ribosyl)glycinamide: step 2/2. This is Phosphoribosylformylglycinamidine cyclo-ligase from Yersinia enterocolitica serotype O:8 / biotype 1B (strain NCTC 13174 / 8081).